Reading from the N-terminus, the 342-residue chain is Dihydroorotase (342 aa).

Positions 13 and 15 each coordinate Zn(2+). Residues 15–17 (HLR) and asparagine 41 each bind substrate. Residues lysine 98, histidine 135, and histidine 173 each contribute to the Zn(2+) site. Lysine 98 bears the N6-carboxylysine mark. Histidine 135 provides a ligand contact to substrate. Leucine 218 lines the substrate pocket. A Zn(2+)-binding site is contributed by aspartate 246. Aspartate 246 is an active-site residue. The substrate site is built by histidine 250 and alanine 262.

Belongs to the metallo-dependent hydrolases superfamily. DHOase family. Class II DHOase subfamily. As to quaternary structure, homodimer. Zn(2+) is required as a cofactor.

It catalyses the reaction (S)-dihydroorotate + H2O = N-carbamoyl-L-aspartate + H(+). It functions in the pathway pyrimidine metabolism; UMP biosynthesis via de novo pathway; (S)-dihydroorotate from bicarbonate: step 3/3. Its function is as follows. Catalyzes the reversible cyclization of carbamoyl aspartate to dihydroorotate. This chain is Dihydroorotase, found in Photobacterium profundum (strain SS9).